The chain runs to 2157 residues: Genome polyprotein (2157 aa).

A lipid anchor (N-myristoyl glycine; by host) is attached at G2. The Cytoplasmic segment spans residues 2–1470; the sequence is GAQVSRQNVG…DLNIANSIIA (1469 aa). The tract at residues 567-584 is amphipathic alpha-helix; sequence PIEQNPVENYIDEVLNEV. Residues H875 and D892 each act as for protease 2A activity in the active site. 2 residues coordinate Zn(2+): C909 and C911. The active-site For protease 2A activity is the C963. C969 and H971 together coordinate Zn(2+). A membrane-binding region spans residues 1095-1164; sequence SDSWLKKFTE…NLRAADSATQ (70 aa). Positions 1095 to 1228 are oligomerization; that stretch reads SDSWLKKFTE…PPGTGKSITT (134 aa). The RNA-binding stretch occupies residues 1116–1120; that stretch reads GNKIS. One can recognise an SF3 helicase domain in the interval 1188-1350; that stretch reads EAKRIKVLYN…YKDTQGKLDV (163 aa). Zn(2+)-binding residues include C1357, C1368, and C1373. The C4-type; degenerate zinc finger occupies 1357 to 1373; that stretch reads CNVNTKIGNAKCCPFVC. The segment at 1400 to 1407 is RNA-binding; sequence EDKRRRQV. The segment at 1411 to 1416 is oligomerization; that stretch reads MSAIFQ. Residues 1471–1486 lie within the membrane without spanning it; that stretch reads IIANIISIAGIIFVIY. The Cytoplasmic segment spans residues 1487–2157; the sequence is KLFCSLQGPY…LLKHEWYEKF (671 aa). O-(5'-phospho-RNA)-tyrosine is present on Y1496. The 179-residue stretch at 1515–1693 folds into the Peptidase C3 domain; sequence GPEEEFGRSI…FSAMLLRSYF (179 aa). Catalysis depends on for protease 3C activity residues H1554, E1585, and C1661. Residues 1925-2038 form the RdRp catalytic domain; that stretch reads DCIMAFDYTN…SYKYTLDMEA (114 aa). The Mg(2+) site is built by D1931 and D2024.

The protein belongs to the picornaviruses polyprotein family. In terms of assembly, interacts with capsid protein VP1 and capsid protein VP3 to form heterotrimeric protomers. Interacts with capsid protein VP0, and capsid protein VP3 to form heterotrimeric protomers. Five protomers subsequently associate to form pentamers which serve as building blocks for the capsid. Interacts with capsid protein VP2, capsid protein VP3 and capsid protein VP4 following cleavage of capsid protein VP0. As to quaternary structure, interacts with capsid protein VP1 and capsid protein VP3 in the mature capsid. In terms of assembly, interacts with capsid protein VP0 and capsid protein VP1 to form heterotrimeric protomers. Five protomers subsequently associate to form pentamers which serve as building blocks for the capsid. Interacts with capsid protein VP4 in the mature capsid. Interacts with protein 2C; this interaction may be important for virion morphogenesis. Interacts with capsid protein VP1 and capsid protein VP3. As to quaternary structure, homodimer. In terms of assembly, homohexamer; forms a hexameric ring structure with 6-fold symmetry characteristic of AAA+ ATPases. Interacts (via N-terminus) with host RTN3 (via reticulon domain); this interaction is important for viral replication. Interacts with capsid protein VP3; this interaction may be important for virion morphogenesis. Interacts with protein 3CD. As to quaternary structure, homodimer. Interacts with host GBF1. Interacts (via GOLD domain) with host ACBD3 (via GOLD domain); this interaction allows the formation of a viral protein 3A/ACBD3 heterotetramer with a 2:2 stoichiometry, which will stimulate the recruitment of host PI4KB in order to synthesize PI4P at the viral RNA replication sites. In terms of assembly, interacts with RNA-directed RNA polymerase. Interacts with protein 3AB and with RNA-directed RNA polymerase. As to quaternary structure, interacts with Viral protein genome-linked and with protein 3CD. Mg(2+) serves as cofactor. In terms of processing, specific enzymatic cleavages in vivo by the viral proteases yield processing intermediates and the mature proteins. Myristoylation is required for the formation of pentamers during virus assembly. Further assembly of 12 pentamers and a molecule of genomic RNA generates the provirion. Post-translationally, during virion maturation, immature virions are rendered infectious following cleavage of VP0 into VP4 and VP2. This maturation seems to be an autocatalytic event triggered by the presence of RNA in the capsid and it is followed by a conformational change infectious virion. In terms of processing, myristoylation is required during RNA encapsidation and formation of the mature virus particle. VPg is uridylylated by the polymerase into VPg-pUpU. This acts as a nucleotide-peptide primer for the genomic RNA replication.

It is found in the virion. It localises to the host cytoplasm. The protein localises to the host cytoplasmic vesicle membrane. The protein resides in the host nucleus. The catalysed reaction is a ribonucleoside 5'-triphosphate + H2O = a ribonucleoside 5'-diphosphate + phosphate + H(+). It carries out the reaction Selective cleavage of Tyr-|-Gly bond in the picornavirus polyprotein.. The enzyme catalyses RNA(n) + a ribonucleoside 5'-triphosphate = RNA(n+1) + diphosphate. It catalyses the reaction Selective cleavage of Gln-|-Gly bond in the poliovirus polyprotein. In other picornavirus reactions Glu may be substituted for Gln, and Ser or Thr for Gly.. Replication or transcription is subject to high level of random mutations by the nucleotide analog ribavirin. In terms of biological role, forms an icosahedral capsid of pseudo T=3 symmetry with capsid proteins VP2 and VP3. The capsid is 300 Angstroms in diameter, composed of 60 copies of each capsid protein and enclosing the viral positive strand RNA genome. Capsid protein VP1 mainly forms the vertices of the capsid. Capsid protein VP1 interacts with host cell receptor to provide virion attachment to target host cells. This attachment induces virion internalization. Tyrosine kinases are probably involved in the entry process. After binding to its receptor, the capsid undergoes conformational changes. Capsid protein VP1 N-terminus (that contains an amphipathic alpha-helix) and capsid protein VP4 are externalized. Together, they shape a pore in the host membrane through which viral genome is translocated to host cell cytoplasm. Forms an icosahedral capsid of pseudo T=3 symmetry with capsid proteins VP2 and VP3. The capsid is 300 Angstroms in diameter, composed of 60 copies of each capsid protein and enclosing the viral positive strand RNA genome. Its function is as follows. Lies on the inner surface of the capsid shell. After binding to the host receptor, the capsid undergoes conformational changes. Capsid protein VP4 is released, Capsid protein VP1 N-terminus is externalized, and together, they shape a pore in the host membrane through which the viral genome is translocated into the host cell cytoplasm. Functionally, component of immature procapsids, which is cleaved into capsid proteins VP4 and VP2 after maturation. Allows the capsid to remain inactive before the maturation step. In terms of biological role, cysteine protease that cleaves viral polyprotein and specific host proteins. It is responsible for the autocatalytic cleavage between the P1 and P2 regions, which is the first cleavage occurring in the polyprotein. Also cleaves the host translation initiation factor EIF4G1, in order to shut down the capped cellular mRNA translation. Inhibits the host nucleus-cytoplasm protein and RNA trafficking by cleaving host members of the nuclear pores. Counteracts stress granule formation probably by antagonizing its assembly or promoting its dissassembly. Plays an essential role in the virus replication cycle by acting as a viroporin. Creates a pore in the host endoplasmic reticulum and as a consequence releases Ca2+ in the cytoplasm of infected cell. In turn, high levels of cytoplasmic calcium may trigger membrane trafficking and transport of viral ER-associated proteins to viroplasms, sites of viral genome replication. Its function is as follows. Induces and associates with structural rearrangements of intracellular membranes. Displays RNA-binding, nucleotide binding and NTPase activities. May play a role in virion morphogenesis and viral RNA encapsidation by interacting with the capsid protein VP3. Functionally, localizes the viral replication complex to the surface of membranous vesicles. Together with protein 3CD binds the Cis-Active RNA Element (CRE) which is involved in RNA synthesis initiation. Acts as a cofactor to stimulate the activity of 3D polymerase, maybe through a nucleid acid chaperone activity. In terms of biological role, localizes the viral replication complex to the surface of membranous vesicles. It inhibits host cell endoplasmic reticulum-to-Golgi apparatus transport and causes the disassembly of the Golgi complex, possibly through GBF1 interaction. This would result in depletion of MHC, trail receptors and IFN receptors at the host cell surface. Plays an essential role in viral RNA replication by recruiting ACBD3 and PI4KB at the viral replication sites, thereby allowing the formation of the rearranged membranous structures where viral replication takes place. Acts as a primer for viral RNA replication and remains covalently bound to viral genomic RNA. VPg is uridylylated prior to priming replication into VPg-pUpU. The oriI viral genomic sequence may act as a template for this. The VPg-pUpU is then used as primer on the genomic RNA poly(A) by the RNA-dependent RNA polymerase to replicate the viral genome. During genome replication, the VPg-RNA linkage is removed by the host TDP2, thereby accelerating replication. During the late stage of the replication cycle, host TDP2 is excluded from sites of viral RNA synthesis and encapsidation, allowing for the generation of progeny virions. Its function is as follows. Involved in the viral replication complex and viral polypeptide maturation. It exhibits protease activity with a specificity and catalytic efficiency that is different from protease 3C. Protein 3CD lacks polymerase activity. Protein 3CD binds to the 5'UTR of the viral genome. Functionally, major viral protease that mediates proteolytic processing of the polyprotein. Cleaves host EIF5B, contributing to host translation shutoff. Also cleaves host PABPC1, contributing to host translation shutoff. In terms of biological role, replicates the viral genomic RNA on the surface of intracellular membranes. May form linear arrays of subunits that propagate along a strong head-to-tail interaction called interface-I. Covalently attaches UMP to a tyrosine of VPg, which is used to prime RNA synthesis. The positive stranded RNA genome is first replicated at virus induced membranous vesicles, creating a dsRNA genomic replication form. This dsRNA is then used as template to synthesize positive stranded RNA genomes. ss(+)RNA genomes are either translated, replicated or encapsidated. The protein is Genome polyprotein of Homo sapiens (Human).